A 1578-amino-acid polypeptide reads, in one-letter code: FERM and PDZ domain-containing protein 1 (1578 aa).

A PDZ domain is found at 57 to 135 (TVKIDKDTLL…SLSITVVRCT (79 aa)). Residues 181 to 496 (NVLKLYLENG…GYYRLLVDPV (316 aa)) enclose the FERM domain. Disordered regions lie at residues 555 to 616 (KEEQ…EEDD), 720 to 743 (SDSS…QGWT), and 759 to 831 (PLAF…VKKY). Residues 720–729 (SDSSESTASR) are compositionally biased toward polar residues. Residues 730–742 (QGGAPPAWGQQGW) are compositionally biased toward low complexity. Positions 793 to 811 (AEPSATSLQNKASTSSPEN) are enriched in polar residues. Residues 822-831 (PSRRGGVKKY) show a composition bias toward basic residues. Residues 924-931 (EPETMETK) form an important for interaction with GPSM2 region. Disordered regions lie at residues 950–1030 (PNNK…LASN), 1070–1194 (KYTE…QGCQ), and 1347–1374 (PQPE…SAGS). Polar residues predominate over residues 968–986 (TPHCSNPGSSGPDTAQARP). The span at 1100 to 1117 (TKEEPQGQLSLERDREVT) shows a compositional bias: basic and acidic residues. Over residues 1139-1150 (DVSNNVSQTLDI) the composition is skewed to polar residues.

In terms of assembly, interacts with GPSM1. Interacts with GPSM2 (via TPR repeat region).

It is found in the cytoplasm. The protein localises to the cytosol. Its subcellular location is the cell membrane. Stabilizes membrane-bound GPSM1, and thereby promotes its interaction with GNAI1. In Homo sapiens (Human), this protein is FERM and PDZ domain-containing protein 1 (FRMPD1).